We begin with the raw amino-acid sequence, 801 residues long: Protein ACCUMULATION AND REPLICATION OF CHLOROPLASTS 6, chloroplastic (801 aa).

Residues 1–67 constitute a chloroplast transit peptide; sequence MEALSHVGIG…SSSFATATTT (67 aa). At 68 to 618 the chain is on the stromal side; that stretch reads ATLVSPPPSI…ADMLKEASVK (551 aa). Residues 89–153 form the J domain; it reads DFYQVLGAQT…RSRREYNEGL (65 aa). Residues 619-638 form a helical membrane-spanning segment; the sequence is ILAAGVAIGLISLFSQKYFL. At 639–801 the chain is on the chloroplast intermembrane side; sequence KSSSSFQRKD…KITEGSVLAS (163 aa). Positions 639-801 are interaction with PDV2; that stretch reads KSSSSFQRKD…KITEGSVLAS (163 aa).

As to quaternary structure, self-interacts. Part of a complex made of ARC3, ARC6, FTSZ1 and FTSZ2. Interacts with FTSZ2-1 and FTSZ2-2 (via C-terminus), but not with FTSZ1; this interaction enables ARC3 binding to FTSZ2. Binds to CDT1A. Interacts (via C-terminus) with PDV2 (via C-terminus) in the chloroplast intermembrane space; this interaction induces homodimerization and leads to the formation of a heterotetramer containing two ARC6 and two PDV2 subunits. Interacts with MCD1 in the chloroplast stroma and facilitates its subsequent binding to FtsZ2-1. Interacts (via J domain) with CJD1 (via J-like domain). In terms of tissue distribution, mostly expressed in young leaves.

The protein localises to the plastid. It is found in the chloroplast inner membrane. In terms of biological role, component of the plastid division machinery consisting in a binary fission accomplished by the simultaneous constriction of the FtsZ ring on the stromal side of the inner envelope membrane, and the ARC5 ring on the cytosolic side of the outer envelope membrane. Involved in the initiation of proplastid and plastid division (including chloroplasts, statoliths and leukoplasts). Promotes the assembly and/or stabilization of the plastid-dividing FtsZ ring, functioning as an antagonistic regulator of FtsZ dynamics against CDP1 and facilitating MCD1 positioning to membrane tethered FtsZ filaments to form the chloroplast Z-Ring; inhibits GDP-induced disassembly of FTSZ2 but enables ARC3 binding to FTSZ2-1. Relays plastid division site position between stroma and outer surface via interactions with the stromal FtsZ ring and the outer membrane PDV2 that recruits cytoplasmic ARC5 ring. Required for plastid equatorial positioning of PDV2 and ARC5. May contribute to gravitropism in stems and hypocotyls. Seems to influence stromule (stroma-filled tubular extensions of the plastid envelope membrane) length and frequency. This chain is Protein ACCUMULATION AND REPLICATION OF CHLOROPLASTS 6, chloroplastic, found in Arabidopsis thaliana (Mouse-ear cress).